Here is a 37-residue protein sequence, read N- to C-terminus: Cytochrome b6-f complex subunit 5 (37 aa).

The helical transmembrane segment at 5–25 threads the bilayer; sequence LLSGIVLGLIPITLVGLFVTA.

This sequence belongs to the PetG family. As to quaternary structure, the 4 large subunits of the cytochrome b6-f complex are cytochrome b6, subunit IV (17 kDa polypeptide, PetD), cytochrome f and the Rieske protein, while the 4 small subunits are PetG, PetL, PetM and PetN. The complex functions as a dimer.

Its subcellular location is the plastid. The protein resides in the chloroplast thylakoid membrane. Functionally, component of the cytochrome b6-f complex, which mediates electron transfer between photosystem II (PSII) and photosystem I (PSI), cyclic electron flow around PSI, and state transitions. PetG is required for either the stability or assembly of the cytochrome b6-f complex. The chain is Cytochrome b6-f complex subunit 5 from Welwitschia mirabilis (Tree tumbo).